A 533-amino-acid chain; its full sequence is D-2-hydroxyglutarate dehydrogenase, mitochondrial (533 aa).

A mitochondrion-targeting transit peptide spans 1–55 (MGLFQKCSRLSLRSSYMWSVCPQYSIAVTARETPDRALIVHWTQHRDVHNSRRLG). The 180-residue stretch at 107–286 (VQGSSDVLLR…TAVSILCPRK (180 aa)) folds into the FAD-binding PCMH-type domain. Residues arginine 397, threonine 401, and lysine 412 each coordinate (R)-2-hydroxyglutarate. Arginine 397 contributes to the (R)-lactate binding site. 3 residues coordinate (R)-malate: arginine 397, threonine 401, and lysine 412. Zn(2+) is bound by residues histidine 445 and histidine 452. Residue asparagine 454 participates in (R)-2-hydroxyglutarate binding. Glutamate 486 is a Zn(2+) binding site. Residue histidine 487 coordinates (R)-2-hydroxyglutarate. Histidine 487 serves as a coordination point for (R)-lactate. Position 487 (histidine 487) interacts with (R)-malate.

The protein belongs to the FAD-binding oxidoreductase/transferase type 4 family. Requires FAD as cofactor.

It localises to the mitochondrion. It carries out the reaction (R)-2-hydroxyglutarate + A = 2-oxoglutarate + AH2. It catalyses the reaction (R)-malate + A = oxaloacetate + AH2. Its function is as follows. Catalyzes the oxidation of D-2-hydroxyglutarate (D-2-HG) to alpha-ketoglutarate. Also catalyzes the oxidation of other D-2-hydroxyacids, such as D-malate (D-MAL) and D-lactate (D-LAC). Exhibits high activities towards D-2-HG and D-MAL but a very weak activity towards D-LAC. The chain is D-2-hydroxyglutarate dehydrogenase, mitochondrial (d2hgdh) from Danio rerio (Zebrafish).